Consider the following 162-residue polypeptide: Caveolin-2 (162 aa).

At 1–86 (MGLESEKADV…FEISKYVLYK (86 aa)) the chain is on the cytoplasmic side. At Tyr19 the chain carries Phosphotyrosine. 3 positions are modified to phosphoserine: Ser20, Ser23, and Ser36. Residues 87 to 107 (FLTFFLAIPLAFAAGILFAIL) constitute an intramembrane region (helical). Over 108–162 (SCLHIWIIMPFVKTCLMVLPSVQTIWKSVTDVVIAPLCTSVGRSFSSVSLQLSQD) the chain is Cytoplasmic.

Belongs to the caveolin family. Monomer or homodimer. Interacts with CAV1; the interaction forms a stable heterooligomeric complex that is required for targeting to lipid rafts and for caveolae formation. Tyrosine phosphorylated forms do not form heterooligomers with the Tyr-19-phosphorylated form existing as a monomer or dimer. Interacts (tyrosine phosphorylated form) with the SH2 domain-containing proteins, RASA1, NCK1 and SRC. Interacts (tyrosine phosphorylated form) with INSR. Interacts (Tyr-19 phosphorylated form) with MAPK1 (phosphorylated form); the interaction, promoted by insulin, leads to nuclear location and MAPK1 activation. Interacts with STAT3; the interaction is increased on insulin-induced tyrosine phosphorylation leading to STAT activation. Post-translationally, phosphorylated on serine and tyrosine residues. CAV1 promotes phosphorylation on Ser-23 which then targets the complex to the plasma membrane, lipid rafts and caveolae. Phosphorylation on Ser-36 appears to modulate mitosis in endothelial cells. Phosphorylation on Tyr-19 is required for insulin-induced phosphorylation of MAPK1 and DNA binding of STAT3. Tyrosine phosphorylation is induced by both EGF and insulin.

Its subcellular location is the nucleus. It localises to the golgi apparatus membrane. The protein localises to the cell membrane. It is found in the membrane. The protein resides in the caveola. Its function is as follows. May act as a scaffolding protein within caveolar membranes. Interacts directly with G-protein alpha subunits and can functionally regulate their activity. Acts as an accessory protein in conjunction with CAV1 in targeting to lipid rafts and driving caveolae formation. The Ser-36 phosphorylated form has a role in modulating mitosis in endothelial cells. Positive regulator of cellular mitogenesis of the MAPK signaling pathway. Required for the insulin-stimulated nuclear translocation and activation of MAPK1 and STAT3, and the subsequent regulation of cell cycle progression. The chain is Caveolin-2 (CAV2) from Echinops telfairi (Lesser hedgehog tenrec).